A 465-amino-acid polypeptide reads, in one-letter code: MLKIYDTLTRSRREFIPLTPGEVRMYVCGMTVYDYCHLGHARVLVVFDSVVRWLQTLGYKVIYVRNITDVDDKIIRRALENHEPFSALTARYIQAMEEDAMALGVISPSFEPRATEYVDSMIAMIESLLNRELAYVASNGDVFYDVRRFPGYGKLSGKSLDDLRAGERVEIDTNKRDPLDFVLWKAAKPDEPSWDSPWGKGRPGWHIECSAMSEHYLGDQFDIHGGGQDLQFPHHENEIAQSEGVHGHSHVNYWMHNGFVRVDNEKMSKSLGNFFTVREVLTRYQPEVVRFFIVRAHYRSPLNYSDAHLNDARSALERLYTVLKNHAPSQDSEVATAVIDWENNVYARRFMSAMNDDFNTPEAVAVLFDLASEANRTGDSHYASLLKALGGVLGLLQQPPQQYLQYPAHLQDGQYSVEEIENMIQQRLQARKERNFAQADTLRQQLAEAGIILEDSPQGTTWRRE.

Cys-28 provides a ligand contact to Zn(2+). The 'HIGH' region motif lies at 30–40; that stretch reads MTVYDYCHLGH. Residues Cys-209, His-234, and Glu-238 each contribute to the Zn(2+) site. Positions 266 to 270 match the 'KMSKS' region motif; that stretch reads KMSKS. Lys-269 provides a ligand contact to ATP.

It belongs to the class-I aminoacyl-tRNA synthetase family. As to quaternary structure, monomer. It depends on Zn(2+) as a cofactor.

It localises to the cytoplasm. It carries out the reaction tRNA(Cys) + L-cysteine + ATP = L-cysteinyl-tRNA(Cys) + AMP + diphosphate. The polypeptide is Cysteine--tRNA ligase (Nitrosomonas europaea (strain ATCC 19718 / CIP 103999 / KCTC 2705 / NBRC 14298)).